Consider the following 294-residue polypeptide: Bidirectional sugar transporter SWEET13 (294 aa).

At 1–7 the chain is on the extracellular side; sequence MALTNNL. The helical transmembrane segment at 8 to 28 threads the bilayer; it reads WAFVFGILGNIISFVVFLAPV. A MtN3/slv 1 domain is found at 10–97; sequence FVFGILGNII…VLFVSYANKK (88 aa). At 29–42 the chain is on the cytoplasmic side; that stretch reads PTFVRICKKKSTEG. Residues 43–63 traverse the membrane as a helical segment; sequence FQSLPYVSALFSAMLWIYYAM. Over 64–69 the chain is Extracellular; it reads QKDGTA. The helical transmembrane segment at 70 to 90 threads the bilayer; it reads FLLITINAFGCVIETIYIVLF. The Cytoplasmic portion of the chain corresponds to 91–104; sequence VSYANKKTRISTLK. Residues 105 to 125 traverse the membrane as a helical segment; it reads VLGLLNFLGFAAIVLVCELLT. The Extracellular segment spans residues 126–132; that stretch reads KGSTREK. The chain crosses the membrane as a helical span at residues 133–153; it reads VLGGICVGFSVSVFAAPLSIM. The 84-residue stretch at 133 to 216 folds into the MtN3/slv 2 domain; sequence VLGGICVGFS…MILYIIFKYY (84 aa). At 154–166 the chain is on the cytoplasmic side; it reads RVVVRTRSVEFMP. Residues 167 to 187 traverse the membrane as a helical segment; the sequence is FSLSLFLTISAVTWLFYGLAI. Residues 188 to 192 lie on the Extracellular side of the membrane; that stretch reads KDFYV. Residues 193 to 213 form a helical membrane-spanning segment; that stretch reads ALPNVLGAFLGAVQMILYIIF. Over 214 to 294 the chain is Cytoplasmic; that stretch reads KYYKTPVAQK…NKDVQKQSQV (81 aa). A disordered region spans residues 273–294; the sequence is KSQNMTDPKDQINKDVQKQSQV. The span at 279-294 shows a compositional bias: basic and acidic residues; it reads DPKDQINKDVQKQSQV.

The protein belongs to the SWEET sugar transporter family. In terms of assembly, forms heterooligomers with SWEET1, SWEET3, SWEET6, SWEET7, SWEET8, SWEET9, SWEET11 and SWEET17. In terms of tissue distribution, expressed at low levels in leaves.

The protein resides in the cell membrane. Mediates both low-affinity uptake and efflux of sugar across the plasma membrane. Involved in nurturing the male gametophyte. The sequence is that of Bidirectional sugar transporter SWEET13 from Arabidopsis thaliana (Mouse-ear cress).